The chain runs to 845 residues: Prickle-like protein 2 (845 aa).

The region spanning 18-126 (FDFQRSSTSD…NVRPFPVTMT (109 aa)) is the PET domain. A Phosphoserine modification is found at S92. LIM zinc-binding domains follow at residues 128 to 193 (AICE…CLKP), 193 to 253 (PRCA…LYAE), and 253 to 317 (EYCD…EDPN). 2 disordered regions span residues 314 to 346 (EDPN…NKGK) and 483 to 546 (YSDM…GSME). A compositionally biased stretch (polar residues) spans 318 to 327 (GSDSSDSAFQ). S319, S321, and S322 each carry phosphoserine. A phosphothreonine mark is found at T535, T537, and T540. Phosphoserine occurs at positions 544 and 547. The tract at residues 558–581 (AEGGAKRQEHLSRFSMPDLSKDSG) is disordered. Residues S608 and S643 each carry the phosphoserine modification. A disordered region spans residues 642–700 (QSFDFDGGIASSKLPGQEGVHIQPMSERTRRRTTSRDDNRRFRPHRSRRSRRSRSDNAL). Residues 683–693 (FRPHRSRRSRR) are compositionally biased toward basic residues. S732 is subject to Phosphoserine. Residues 823 to 845 (STLGGRGQLHSRKRQKSKNCIIS) form a disordered region. Position 842 is a cysteine methyl ester (C842). The S-farnesyl cysteine moiety is linked to residue C842. The propeptide at 843 to 845 (IIS) is removed in mature form.

This sequence belongs to the prickle / espinas / testin family. As to expression, expressed in the hippocampus and cerebral cortex.

Its subcellular location is the nucleus membrane. The chain is Prickle-like protein 2 (Prickle2) from Mus musculus (Mouse).